A 95-amino-acid chain; its full sequence is Aspartyl/glutamyl-tRNA(Asn/Gln) amidotransferase subunit C (95 aa).

Belongs to the GatC family. In terms of assembly, heterotrimer of A, B and C subunits.

The enzyme catalyses L-glutamyl-tRNA(Gln) + L-glutamine + ATP + H2O = L-glutaminyl-tRNA(Gln) + L-glutamate + ADP + phosphate + H(+). It catalyses the reaction L-aspartyl-tRNA(Asn) + L-glutamine + ATP + H2O = L-asparaginyl-tRNA(Asn) + L-glutamate + ADP + phosphate + 2 H(+). Allows the formation of correctly charged Asn-tRNA(Asn) or Gln-tRNA(Gln) through the transamidation of misacylated Asp-tRNA(Asn) or Glu-tRNA(Gln) in organisms which lack either or both of asparaginyl-tRNA or glutaminyl-tRNA synthetases. The reaction takes place in the presence of glutamine and ATP through an activated phospho-Asp-tRNA(Asn) or phospho-Glu-tRNA(Gln). The protein is Aspartyl/glutamyl-tRNA(Asn/Gln) amidotransferase subunit C of Nitrosospira multiformis (strain ATCC 25196 / NCIMB 11849 / C 71).